We begin with the raw amino-acid sequence, 162 residues long: ATP synthase subunit b (162 aa).

The helical transmembrane segment at 16–36 (GISGGTIIYQLLMFIILLALL) threads the bilayer.

The protein belongs to the ATPase B chain family. As to quaternary structure, F-type ATPases have 2 components, F(1) - the catalytic core - and F(0) - the membrane proton channel. F(1) has five subunits: alpha(3), beta(3), gamma(1), delta(1), epsilon(1). F(0) has three main subunits: a(1), b(2) and c(10-14). The alpha and beta chains form an alternating ring which encloses part of the gamma chain. F(1) is attached to F(0) by a central stalk formed by the gamma and epsilon chains, while a peripheral stalk is formed by the delta and b chains.

It localises to the cell membrane. Functionally, f(1)F(0) ATP synthase produces ATP from ADP in the presence of a proton or sodium gradient. F-type ATPases consist of two structural domains, F(1) containing the extramembraneous catalytic core and F(0) containing the membrane proton channel, linked together by a central stalk and a peripheral stalk. During catalysis, ATP synthesis in the catalytic domain of F(1) is coupled via a rotary mechanism of the central stalk subunits to proton translocation. Its function is as follows. Component of the F(0) channel, it forms part of the peripheral stalk, linking F(1) to F(0). The sequence is that of ATP synthase subunit b from Bacillus caldotenax.